Reading from the N-terminus, the 246-residue chain is Pyridoxine 5'-phosphate synthase (246 aa).

Position 10 (asparagine 10) interacts with 3-amino-2-oxopropyl phosphate. Position 12 to 13 (12 to 13 (DH)) interacts with 1-deoxy-D-xylulose 5-phosphate. Arginine 21 provides a ligand contact to 3-amino-2-oxopropyl phosphate. Catalysis depends on histidine 46, which acts as the Proton acceptor. Arginine 48 and histidine 53 together coordinate 1-deoxy-D-xylulose 5-phosphate. Residue glutamate 73 is the Proton acceptor of the active site. Residue threonine 103 coordinates 1-deoxy-D-xylulose 5-phosphate. Residue histidine 193 is the Proton donor of the active site. 3-amino-2-oxopropyl phosphate contacts are provided by residues glycine 194 and 215–216 (GH).

It belongs to the PNP synthase family. In terms of assembly, homooctamer; tetramer of dimers.

The protein resides in the cytoplasm. The enzyme catalyses 3-amino-2-oxopropyl phosphate + 1-deoxy-D-xylulose 5-phosphate = pyridoxine 5'-phosphate + phosphate + 2 H2O + H(+). Its pathway is cofactor biosynthesis; pyridoxine 5'-phosphate biosynthesis; pyridoxine 5'-phosphate from D-erythrose 4-phosphate: step 5/5. Its function is as follows. Catalyzes the complicated ring closure reaction between the two acyclic compounds 1-deoxy-D-xylulose-5-phosphate (DXP) and 3-amino-2-oxopropyl phosphate (1-amino-acetone-3-phosphate or AAP) to form pyridoxine 5'-phosphate (PNP) and inorganic phosphate. This is Pyridoxine 5'-phosphate synthase from Rhodopirellula baltica (strain DSM 10527 / NCIMB 13988 / SH1).